A 625-amino-acid polypeptide reads, in one-letter code: 1-deoxy-D-xylulose-5-phosphate synthase (625 aa).

Thiamine diphosphate contacts are provided by residues His-80 and 121–123; that span reads GHS. A Mg(2+)-binding site is contributed by Asp-152. Residues 153–154, Asn-181, Tyr-290, and Glu-371 contribute to the thiamine diphosphate site; that span reads GS. Position 181 (Asn-181) interacts with Mg(2+).

Belongs to the transketolase family. DXPS subfamily. In terms of assembly, homodimer. Mg(2+) is required as a cofactor. The cofactor is thiamine diphosphate.

It carries out the reaction D-glyceraldehyde 3-phosphate + pyruvate + H(+) = 1-deoxy-D-xylulose 5-phosphate + CO2. The protein operates within metabolic intermediate biosynthesis; 1-deoxy-D-xylulose 5-phosphate biosynthesis; 1-deoxy-D-xylulose 5-phosphate from D-glyceraldehyde 3-phosphate and pyruvate: step 1/1. Functionally, catalyzes the acyloin condensation reaction between C atoms 2 and 3 of pyruvate and glyceraldehyde 3-phosphate to yield 1-deoxy-D-xylulose-5-phosphate (DXP). The polypeptide is 1-deoxy-D-xylulose-5-phosphate synthase (Haemophilus influenzae (strain PittGG)).